The chain runs to 132 residues: Small ribosomal subunit protein uS8 (132 aa).

It belongs to the universal ribosomal protein uS8 family. As to quaternary structure, part of the 30S ribosomal subunit. Contacts proteins S5 and S12.

Its function is as follows. One of the primary rRNA binding proteins, it binds directly to 16S rRNA central domain where it helps coordinate assembly of the platform of the 30S subunit. This chain is Small ribosomal subunit protein uS8, found in Bartonella quintana (strain Toulouse) (Rochalimaea quintana).